Here is a 673-residue protein sequence, read N- to C-terminus: Probable serine/threonine-protein kinase SCO3848 (673 aa).

A Protein kinase domain is found at 11-277 (YELGPVLGRG…EMRVDIEACL (267 aa)). Residues 17 to 25 (LGRGGMAEV) and Lys40 each bind ATP. Asp138 functions as the Proton acceptor in the catalytic mechanism. Residues 302–345 (DQPTTALRSDGGGGATTMLPPMNPDDGGYGYDERPDRRRQQPRK) are disordered. 4 PASTA domains span residues 379–445 (GNDK…VVST), 446–511 (GAPK…EVAK), 512–580 (AEEK…VVGK), and 581–649 (AVEK…MTVP). Residues 472–500 (FEVETKQTESSQDEGTILSQNPDPGKELE) are disordered. Residues 479–493 (TESSQDEGTILSQNP) are compositionally biased toward polar residues. 2 disordered regions span residues 613–641 (AQGS…PAAT) and 653–673 (GNGN…GFGD).

The protein belongs to the protein kinase superfamily. Ser/Thr protein kinase family.

The catalysed reaction is L-seryl-[protein] + ATP = O-phospho-L-seryl-[protein] + ADP + H(+). It carries out the reaction L-threonyl-[protein] + ATP = O-phospho-L-threonyl-[protein] + ADP + H(+). The polypeptide is Probable serine/threonine-protein kinase SCO3848 (Streptomyces coelicolor (strain ATCC BAA-471 / A3(2) / M145)).